Consider the following 311-residue polypeptide: HPr kinase/phosphorylase (311 aa).

Active-site residues include H138 and K159. Position 153 to 160 (153 to 160 (GDSGIGKS)) interacts with ATP. Residue S160 coordinates Mg(2+). Catalysis depends on D177, which acts as the Proton acceptor; for phosphorylation activity. Proton donor; for dephosphorylation activity. An important for the catalytic mechanism of both phosphorylation and dephosphorylation region spans residues 201-210 (IEIRGVGIID). E202 contacts Mg(2+). R243 is a catalytic residue. The segment at 264–269 (PVKTGR) is important for the catalytic mechanism of dephosphorylation.

Belongs to the HPrK/P family. Homohexamer. The cofactor is Mg(2+).

The enzyme catalyses [HPr protein]-L-serine + ATP = [HPr protein]-O-phospho-L-serine + ADP + H(+). It carries out the reaction [HPr protein]-O-phospho-L-serine + phosphate + H(+) = [HPr protein]-L-serine + diphosphate. Its function is as follows. Catalyzes the ATP- as well as the pyrophosphate-dependent phosphorylation of a specific serine residue in HPr, a phosphocarrier protein of the phosphoenolpyruvate-dependent sugar phosphotransferase system (PTS). HprK/P also catalyzes the pyrophosphate-producing, inorganic phosphate-dependent dephosphorylation (phosphorolysis) of seryl-phosphorylated HPr (P-Ser-HPr). The two antagonistic activities of HprK/P are regulated by several intracellular metabolites, which change their concentration in response to the absence or presence of rapidly metabolisable carbon sources (glucose, fructose, etc.) in the growth medium. Therefore, by controlling the phosphorylation state of HPr, HPrK/P is a sensor enzyme that plays a major role in the regulation of carbon metabolism and sugar transport: it mediates carbon catabolite repression (CCR), and regulates PTS-catalyzed carbohydrate uptake and inducer exclusion. The protein is HPr kinase/phosphorylase of Streptococcus pneumoniae (strain 70585).